We begin with the raw amino-acid sequence, 346 residues long: MIKVAIVGASGYTGVELIRILHSHPEVAVTCVTSEQSAGRPVSSVFPSLRGRCDIVLENLEPVGIAEKVDIVFTALPHKAAMEVVPTFMKMGKDVIDLSADYRIHDADTYGKWYEPHLNPELLPEAVYGIPELRRAEIAEASLIANPGCYPTSVILGLAPLLKGKVIDPRSIIVDAASGTSGAGRGAKVDNLYCEVNEGFRAYGVGGVHRHIPEIEQELSLLAGNPLNITFTPHLVPMDRGILSTIYSQPTGSVKAADLIALYQAFYDGEPFVRVLPEGVLPSTAHVRGSNFCDIGITVDQRTGRVIVISAIDNLVKGASGQAVQNMNLMCGLPETLGLDLLPVFP.

Cysteine 149 is a catalytic residue.

This sequence belongs to the NAGSA dehydrogenase family. Type 1 subfamily.

Its subcellular location is the cytoplasm. The catalysed reaction is N-acetyl-L-glutamate 5-semialdehyde + phosphate + NADP(+) = N-acetyl-L-glutamyl 5-phosphate + NADPH + H(+). The protein operates within amino-acid biosynthesis; L-arginine biosynthesis; N(2)-acetyl-L-ornithine from L-glutamate: step 3/4. Functionally, catalyzes the NADPH-dependent reduction of N-acetyl-5-glutamyl phosphate to yield N-acetyl-L-glutamate 5-semialdehyde. The protein is N-acetyl-gamma-glutamyl-phosphate reductase of Citrifermentans bemidjiense (strain ATCC BAA-1014 / DSM 16622 / JCM 12645 / Bem) (Geobacter bemidjiensis).